The sequence spans 767 residues: Polyribonucleotide nucleotidyltransferase (767 aa).

2 residues coordinate Mg(2+): Asp488 and Asp494. Residues 555-614 (PRLYTMKINPEKIRDVIGKGGSVIRALTEETGCQIDIGEDGTITIASTDADKAELAKKRI) form the KH domain. The S1 motif domain maps to 624–692 (GKVYEGPVVK…EKGRIKLSMK (69 aa)). Positions 700 to 742 (GMEFEERAPRREGGFGDRGDRGDRGPRRDRGGDRPERGERPAR) are enriched in basic and acidic residues. A disordered region spans residues 700 to 767 (GMEFEERAPR…QPQQQQGQQQ (68 aa)). Positions 752–767 (GAPAAGQPQQQQGQQQ) are enriched in low complexity.

This sequence belongs to the polyribonucleotide nucleotidyltransferase family. Mg(2+) serves as cofactor.

The protein localises to the cytoplasm. It carries out the reaction RNA(n+1) + phosphate = RNA(n) + a ribonucleoside 5'-diphosphate. In terms of biological role, involved in mRNA degradation. Catalyzes the phosphorolysis of single-stranded polyribonucleotides processively in the 3'- to 5'-direction. This chain is Polyribonucleotide nucleotidyltransferase, found in Leptothrix cholodnii (strain ATCC 51168 / LMG 8142 / SP-6) (Leptothrix discophora (strain SP-6)).